Reading from the N-terminus, the 90-residue chain is Small ribosomal subunit protein uS19 (90 aa).

This sequence belongs to the universal ribosomal protein uS19 family.

In terms of biological role, protein S19 forms a complex with S13 that binds strongly to the 16S ribosomal RNA. This Thioalkalivibrio sulfidiphilus (strain HL-EbGR7) protein is Small ribosomal subunit protein uS19.